The sequence spans 179 residues: MTFEDDLQASVRTIPDYPKPGVMFRDITTLLGDARAFRRAVDQLVHPWAGSKIDKVAGIEARGFILGGAVAHQVSAGFVPIRKKGKLPHQTVRMAYALEYGTDEMEMHVDAIARGERVILVDDLIATGGTAEGAVKLLRQIGADVVAACFIIDLPDLGGAAKLRAMDVPVRTLMAFEGH.

This sequence belongs to the purine/pyrimidine phosphoribosyltransferase family. Homodimer.

It is found in the cytoplasm. It catalyses the reaction AMP + diphosphate = 5-phospho-alpha-D-ribose 1-diphosphate + adenine. The protein operates within purine metabolism; AMP biosynthesis via salvage pathway; AMP from adenine: step 1/1. Its function is as follows. Catalyzes a salvage reaction resulting in the formation of AMP, that is energically less costly than de novo synthesis. This Nitrobacter winogradskyi (strain ATCC 25391 / DSM 10237 / CIP 104748 / NCIMB 11846 / Nb-255) protein is Adenine phosphoribosyltransferase.